The chain runs to 89 residues: Small ribosomal subunit protein uS15 (89 aa).

It belongs to the universal ribosomal protein uS15 family. As to quaternary structure, part of the 30S ribosomal subunit. Forms a bridge to the 50S subunit in the 70S ribosome, contacting the 23S rRNA.

In terms of biological role, one of the primary rRNA binding proteins, it binds directly to 16S rRNA where it helps nucleate assembly of the platform of the 30S subunit by binding and bridging several RNA helices of the 16S rRNA. Its function is as follows. Forms an intersubunit bridge (bridge B4) with the 23S rRNA of the 50S subunit in the ribosome. This chain is Small ribosomal subunit protein uS15, found in Dictyoglomus thermophilum (strain ATCC 35947 / DSM 3960 / H-6-12).